We begin with the raw amino-acid sequence, 588 residues long: Nuclear hormone receptor family member nhr-23 (588 aa).

A disordered region spans residues 50-73; it reads LHAKSSLQPSLSIETPKSKENDES. Polar residues predominate over residues 52 to 64; it reads AKSSLQPSLSIET. Positions 160–235 form a DNA-binding region, nuclear receptor; sequence VIPCKVCGDK…LGMSRDAVKF (76 aa). 2 consecutive NR C4-type zinc fingers follow at residues 163–183 and 199–223; these read CKVC…CEGC and CPRQ…LKKC. The NR LBD domain occupies 345–586; sequence PEEDVATRVI…ALYKELFTAD (242 aa).

This sequence belongs to the nuclear hormone receptor family. NR1 subfamily. Expressed in the germline and oocytes and is a maternal gene product. In males and sperm-producing hermaphrodites, expressed in early pachytene spermatocytes, increasing in level throughout late pachytene. Expression is undetectable in meiotically dividing spermatocytes or mature spermatids.

The protein resides in the nucleus. Its function is as follows. Orphan nuclear receptor. Transcription factor. Modulates expression of target genes, such as Period protein homolog lin-42 and microRNA let-7, by binding to hormone response elements (HRE). Involved in promoting oscillatory expression of the primary transcripts of let-7 and paralogous microRNAs miR-48, miR-84, and miR-241. Plays a role in normal development and required to regulate each larval molt. Involved in regulating both the frequency and number of molts, acting as part of a negative feedback loop with the let-7 family of microRNAs, perhaps contributing to a self-sustaining molecular-genetic oscillator. Positively modulates expression of collagen and hedgehog-related genes. Involved in development of the gonad and associated epidermal structures. Required in spermatogenesis, acting following the sperm/oocyte cell fate decision, downstream of the canonical sex-determination pathway. Involved in regulating formation of the sperm-specific fibrous body-membranous organelle (FB-MO) complexes, acting independently of transcription regulator spe-44. This Caenorhabditis elegans protein is Nuclear hormone receptor family member nhr-23.